Here is a 510-residue protein sequence, read N- to C-terminus: Solute carrier family 2, facilitated glucose transporter member 2 (510 aa).

Residues 1 to 10 (MTEDKVTGTL) are Cytoplasmic-facing. The chain crosses the membrane as a helical span at residues 11 to 31 (VLAVFTAVLSSFQFGYDIGVI). The Extracellular portion of the chain corresponds to 32 to 96 (NAPQQVIITH…SASLITMFWS (65 aa)). N62 carries an N-linked (GlcNAc...) asparagine glycan. A helical membrane pass occupies residues 97–117 (LSVSSFAVGGMIASFFGGLLG). Residues 118–122 (DKLGR) lie on the Cytoplasmic side of the membrane. A helical membrane pass occupies residues 123-143 (IKALLVANILSLVGALLMGFS). Residues 144–157 (KLGPSHILIISGRG) lie on the Extracellular side of the membrane. Residues 158 to 178 (ISGLYCGLISGLIPMYIGEIA) form a helical membrane-spanning segment. At 179-191 (PTTLRGAIGALHQ) the chain is on the cytoplasmic side. A D-glucose-binding site is contributed by Q191. The chain crosses the membrane as a helical span at residues 192 to 212 (LAIVTGILISQIVGLDFILGN). Residues 213–215 (HEL) are Extracellular-facing. Residues 216-236 (WHILLGLSAVPAILQCLLLFF) form a helical membrane-spanning segment. The Cytoplasmic segment spans residues 237 to 301 (CPESPRYLYI…LFTNASYRQP (65 aa)). Residues 302–322 (ILVALMLHAAQQFSGINGIFY) traverse the membrane as a helical segment. Residues 312-313 (QQ) and N318 each bind D-glucose. Residues 323 to 336 (YSTSIFQTAGISQP) lie on the Extracellular side of the membrane. The helical transmembrane segment at 337-357 (VYATIGVGAVNTVFTAVSVFL) threads the bilayer. N347 serves as a coordination point for D-glucose. At 358 to 365 (VEKAGRRS) the chain is on the cytoplasmic side. The chain crosses the membrane as a helical span at residues 366–386 (LFLIGMSGMFVCAIFMSVGLV). The Extracellular portion of the chain corresponds to 387–400 (LLSKFPWMNYVSMT). A helical membrane pass occupies residues 401–421 (AIFLFVSFFEIGPGPIPWFMV). The D-glucose site is built by E410 and W418. Topologically, residues 422 to 431 (AEFFSQGPRP) are cytoplasmic. The chain crosses the membrane as a helical span at residues 432–452 (AALAIAAFSNWTGNFIIALCF). The Extracellular portion of the chain corresponds to 453–454 (QY). The chain crosses the membrane as a helical span at residues 455 to 475 (IADFCGPYVFFLLLVWSWPLF). The Cytoplasmic segment spans residues 476–510 (CSHFLKFQKPKENPLRKSQQSSERRGVQLKRQKLL). A disordered region spans residues 490-510 (LRKSQQSSERRGVQLKRQKLL).

Belongs to the major facilitator superfamily. Sugar transporter (TC 2.A.1.1) family. Glucose transporter subfamily. N-glycosylated; required for stability and retention at the cell surface of pancreatic beta cells.

It localises to the cell membrane. It catalyses the reaction D-glucose(out) = D-glucose(in). It carries out the reaction D-fructose(out) = D-fructose(in). The enzyme catalyses L-dehydroascorbate(out) = L-dehydroascorbate(in). The catalysed reaction is D-galactose(in) = D-galactose(out). Its activity is regulated as follows. D-glucose and maltose competitively inhibit fructose transport. D-glucose, D-fructose and maltose inhibit deoxyglucose transport. Its function is as follows. Facilitative hexose transporter that mediates the transport of glucose, fructose and galactose. Likely mediates the bidirectional transfer of glucose across the plasma membrane of hepatocytes and is responsible for uptake of glucose by the beta cells; may comprise part of the glucose-sensing mechanism of the beta cell. May also participate with the Na(+)/glucose cotransporter in the transcellular transport of glucose in the small intestine and kidney. Also able to mediate the transport of dehydroascorbate. The protein is Solute carrier family 2, facilitated glucose transporter member 2 of Bos taurus (Bovine).